Reading from the N-terminus, the 485-residue chain is Adenosylhomocysteinase (485 aa).

The substrate site is built by threonine 64, aspartate 139, and glutamate 205. 206-208 contacts NAD(+); the sequence is TTT. Residues lysine 235 and aspartate 239 each contribute to the substrate site. Residues asparagine 240, 269 to 274, glutamate 292, asparagine 327, and 348 to 350 each bind NAD(+); these read GYGDVG and IGH.

The protein belongs to the adenosylhomocysteinase family. As to quaternary structure, homotetramer. The cofactor is NAD(+).

It carries out the reaction S-adenosyl-L-homocysteine + H2O = L-homocysteine + adenosine. Its pathway is amino-acid biosynthesis; L-homocysteine biosynthesis; L-homocysteine from S-adenosyl-L-homocysteine: step 1/1. Functionally, adenosylhomocysteine is a competitive inhibitor of S-adenosyl-L-methionine-dependent methyl transferase reactions; therefore adenosylhomocysteinase may play a key role in the control of methylations via regulation of the intracellular concentration of adenosylhomocysteine. This is Adenosylhomocysteinase (SAHH) from Mesembryanthemum crystallinum (Common ice plant).